A 223-amino-acid polypeptide reads, in one-letter code: Noggin-3 (223 aa).

An N-terminal signal peptide occupies residues 1-23 (MDNIPYFLATVLIFSLGFRIEEG). Asn-60 and Asn-93 each carry an N-linked (GlcNAc...) asparagine glycan.

This sequence belongs to the noggin family. Homodimer; disulfide-linked.

Its subcellular location is the secreted. In terms of biological role, may function as an inhibitor of bone morphogenetic proteins (BMP) signaling during later stages of development including late phases of dorsoventral patterning, to refine the early pattern set up by the interaction of chordino and BMP2/4. Not involved in organizer function or early phases of dorsoventral pattern formation. The protein is Noggin-3 (nog3) of Danio rerio (Zebrafish).